We begin with the raw amino-acid sequence, 662 residues long: Cytochrome bo(3) ubiquinol oxidase subunit 1 (662 aa).

The Extracellular portion of the chain corresponds to 1-14; sequence MFGKLTFDAIPYHE. A helical membrane pass occupies residues 15 to 35; it reads PIIMITYIAIILIALCIASTI. At 36-58 the chain is on the cytoplasmic side; the sequence is TYYKKWKYLWYEWFTTVDHKKIS. A helical membrane pass occupies residues 59–79; it reads IMYGILAFVMLFRGFVDAILM. Positions 71, 75, and 98 each coordinate a ubiquinone. The Extracellular portion of the chain corresponds to 80-106; it reads RTQQVVASAGFKGFLPPHHYDQIFTAH. Residue His-106 participates in heme b binding. The helical transmembrane segment at 107–127 threads the bilayer; it reads GVIMIFFVAMPLVIGLMNLVI. The Cytoplasmic portion of the chain corresponds to 128–145; it reads PLQIGARDVAFPFLNNLS. The chain crosses the membrane as a helical span at residues 146–166; it reads FWLNVSSAVLLTLSLGIGEFA. Residues 167–189 are Extracellular-facing; sequence QTGWLAYPPLSGIKYSSGVGVDY. Trp-170 is a heme b binding site. A helical transmembrane segment spans residues 190 to 210; sequence WIWSLQISGVGTTLTGINFLV. Over 211–232 the chain is Cytoplasmic; sequence TILKMRAPGMSFFKMPVFTWTS. The chain crosses the membrane as a helical span at residues 233–253; that stretch reads LCTNILIVISFPVLTVTLVLL. Topologically, residues 254–277 are extracellular; that stretch reads TLDRYFNFHFFTNDLGGNAMMYVN. Residues 278–298 traverse the membrane as a helical segment; sequence LIWIWGHPEVYILVLPVFGVF. Cu(2+) is bound at residue His-284. The segment at residues 284 to 288 is a cross-link (1'-histidyl-3'-tyrosine (His-Tyr)); sequence HPEVY. Tyr-288 contacts Fe(II)-heme o. The Cytoplasmic portion of the chain corresponds to 299-309; the sequence is SEVVATFSKKR. The chain crosses the membrane as a helical span at residues 310 to 330; that stretch reads LFGYVSLVWATLSITILSFIV. Topologically, residues 331-346 are extracellular; that stretch reads WLHHFFTMGAGADVNT. Cu(2+) contacts are provided by His-333 and His-334. The helical transmembrane segment at 347–367 threads the bilayer; that stretch reads FFGITTMIIAIPTGVKIFNWL. Topologically, residues 368–380 are cytoplasmic; it reads FTIYQGRVHMHSS. A helical membrane pass occupies residues 381 to 401; that stretch reads ILWTLGFLVTFSIGGMTGVLL. Residues 402–413 lie on the Extracellular side of the membrane; the sequence is SVPPADFVLHNS. Fe(II)-heme o is bound by residues His-411 and His-419. The helical transmembrane segment at 414–434 threads the bilayer; the sequence is LFLVAHFHNVIIGGVVFGCFA. Position 421 (His-421) interacts with heme b. Topologically, residues 435-456 are cytoplasmic; the sequence is GINYWFPKLFGFVLNEIWGKRA. The helical transmembrane segment at 457–477 threads the bilayer; that stretch reads FWFWIIGFFLAFIPLYFLGLM. Residues 478–493 lie on the Extracellular side of the membrane; it reads GMTRRLSQNIDSEFHM. Heme b is bound by residues Arg-481 and Arg-482. Residues 494-514 traverse the membrane as a helical segment; sequence LLCIAAIGACFIGIGIICQVI. Topologically, residues 515-586 are cytoplasmic; it reads QFFISIKERR…INSINYHDIH (72 aa). The chain crosses the membrane as a helical span at residues 587–607; sequence MPKNTGLGFMISIFSLFFGFS. Ala-608 is a topological domain (extracellular). A helical membrane pass occupies residues 609 to 629; sequence VWHITWLCILSFLAIIISLFI. Over 630–662 the chain is Cytoplasmic; the sequence is NSLNEDTEYTISAEEIKKIEHQYWKNIQKAGLK.

This sequence belongs to the heme-copper respiratory oxidase family. In terms of assembly, the cytochrome bo(3) ubiquinol oxidase complex is a heterooctamer of two A chains, two B chains, two C chains and two D chains. The cofactor is Cu(2+). Heme b is required as a cofactor. Requires Fe(II)-heme o as cofactor.

The protein resides in the cell membrane. It catalyses the reaction 2 a ubiquinol + O2 + n H(+)(in) = 2 a ubiquinone + 2 H2O + n H(+)(out). Functionally, cytochrome bo(3) ubiquinol oxidase is the terminal enzyme in the aerobic respiratory chain. Catalyzes the four-electron reduction of O2 to water, using a ubiquinol as a membrane soluble electron donor for molecular oxygen reduction. Has proton pump activity across the membrane in addition to electron transfer, pumping 2 protons/electron and generating a proton motive force. All the redox centers of this enzyme complex are located within the largest subunit, subunit I. Protons are probably pumped via D- and K- channels found in this subunit. The chain is Cytochrome bo(3) ubiquinol oxidase subunit 1 (cyoB) from Buchnera aphidicola subsp. Acyrthosiphon pisum (strain APS) (Acyrthosiphon pisum symbiotic bacterium).